A 26-amino-acid polypeptide reads, in one-letter code: Metallothionein (26 aa).

Residues Met-1 to Cys-14 are compositionally biased toward low complexity. The interval Met-1 to Lys-26 is disordered. Residues Cys-4, Cys-6, Cys-12, Cys-14, Cys-18, Cys-20, and Cys-23 each contribute to the Cu(+) site. Over residues Gly-15 to Lys-26 the composition is skewed to cys residues.

This sequence belongs to the metallothionein superfamily. Type 8 family.

The protein is Metallothionein (cmt) of Neurospora crassa (strain ATCC 24698 / 74-OR23-1A / CBS 708.71 / DSM 1257 / FGSC 987).